Reading from the N-terminus, the 324-residue chain is MSVNLWAPSASIATLKQRAVILRSIREFFYARNVMEVETPSLSGASVTDIHLVSFNTRFVGPGHASGLELYLQTSPEFAMKRLLAAGSGPIFQLCKAFRNEEAGSHHNPEFTMLEWYRPGFDEFALMAEIDELMQLILDVAPSERLTYQHAFEQVLGLDPLTASLEQLQQLACEQGFADIAKNETHRDTLLQLLFCMKVEPTIGQHKPCFVYHFPASQAALAQICDHDSRVAGRFELYYKNMELANGFNELTNATEQAKRFNDDNEYRKQNGLKQVPMDKHLIAALEHGLAPCAGVALGIDRLVMLATQKSNIKEVIAFDVTRA.

75 to 77 (SPE) is a binding site for substrate. ATP-binding positions include 99 to 101 (RNE) and asparagine 108. Tyrosine 117 contacts substrate. 243–244 (EL) provides a ligand contact to ATP. Glutamate 250 contributes to the substrate binding site. Glycine 299 contributes to the ATP binding site.

It belongs to the class-II aminoacyl-tRNA synthetase family. EpmA subfamily. In terms of assembly, homodimer.

The enzyme catalyses D-beta-lysine + L-lysyl-[protein] + ATP = N(6)-((3R)-3,6-diaminohexanoyl)-L-lysyl-[protein] + AMP + diphosphate + H(+). Functionally, with EpmB is involved in the beta-lysylation step of the post-translational modification of translation elongation factor P (EF-P). Catalyzes the ATP-dependent activation of (R)-beta-lysine produced by EpmB, forming a lysyl-adenylate, from which the beta-lysyl moiety is then transferred to the epsilon-amino group of a conserved specific lysine residue in EF-P. The protein is Elongation factor P--(R)-beta-lysine ligase of Pseudoalteromonas translucida (strain TAC 125).